An 815-amino-acid chain; its full sequence is MPKHLLIVESPAKAKTINKYLGKDFTVLASYGHVRDLVPKEGAVDPENGFAMRYDLIDKNEKHVEAITKAAKTADSIYLATDPDREGEAISWHISEILKERGLLKDKPMQRIVFTEITPRAIKEAIQKPRMIASDLVDAQQARRALDYLVGFNLSPVLWRKVQRGLSAGRVQSPALRMIVEREEEIEAFITREYWSIHAECAHPAQHFSAKLIKLDGQKFEQFTITDSDTAAAAQRRIQQVAQGRLHITDVTNKERKRRPAPPFITSTLQQEASRKLGFTTRKTMQIAQKLYEGIALGEEGSVGLITYMRTDSVNLSLDALSEIRDIIARDYGTNALPDKPNVYTTKSKNAQEAHEAVRPTSALRTPTQVAPYLSNEEHRLYELVWKRAVASQMIPAILNTTSVDLAAGNEHVFRATGTTVVVQGFLAVYEEGKDNKNAEDDDEGRKLPVMKTGENVPLERILTEQHFTQPPPRYTEAALVKALEEYGIGRPSTYASIIQTLLFRKYVDMEGRSFRPTDIGRAVSKFLASHFTRYVDYDFTAHLEDELDAISRGEEEWIPLMKKFWVPFKELVEDKKDSLDKTDAGSVRLLGIDPTSGKEVSGRIGRFGPMVQIGTVDDEEKPRFASLRPNQSIYSISLEEAIELFKMPRVLGEDQSQQVSVGIGRFGPFAKRGSTYVSLKSEDDPYTIDLARATFLINEKEEIARNRIIKNFENSQIQVLNGRFGPYISDGKLNGKIPKDREPASLTLEEAQQLLIDTGKPARKNFSTKKTATKNETRKQTTKKRTTDAKATKKVSDKPVKKQIKKRIAPNITE.

Residues 3–119 (KHLLIVESPA…QRIVFTEITP (117 aa)) enclose the Toprim domain. The Mg(2+) site is built by Glu9 and Asp82. The region spanning 133 to 573 (ASDLVDAQQA…KFWVPFKELV (441 aa)) is the Topo IA-type catalytic domain. The interaction with DNA stretch occupies residues 167 to 172 (SAGRVQ). Tyr308 serves as the catalytic O-(5'-phospho-DNA)-tyrosine intermediate. The segment at 760–815 (GKPARKNFSTKKTATKNETRKQTTKKRTTDAKATKKVSDKPVKKQIKKRIAPNITE) is disordered. A compositionally biased stretch (basic and acidic residues) spans 774-801 (TKNETRKQTTKKRTTDAKATKKVSDKPV).

It belongs to the type IA topoisomerase family. In terms of assembly, monomer. It depends on Mg(2+) as a cofactor.

The enzyme catalyses ATP-independent breakage of single-stranded DNA, followed by passage and rejoining.. In terms of biological role, releases the supercoiling and torsional tension of DNA, which is introduced during the DNA replication and transcription, by transiently cleaving and rejoining one strand of the DNA duplex. Introduces a single-strand break via transesterification at a target site in duplex DNA. The scissile phosphodiester is attacked by the catalytic tyrosine of the enzyme, resulting in the formation of a DNA-(5'-phosphotyrosyl)-enzyme intermediate and the expulsion of a 3'-OH DNA strand. The free DNA strand then undergoes passage around the unbroken strand, thus removing DNA supercoils. Finally, in the religation step, the DNA 3'-OH attacks the covalent intermediate to expel the active-site tyrosine and restore the DNA phosphodiester backbone. The sequence is that of DNA topoisomerase 1 from Xylella fastidiosa (strain 9a5c).